A 320-amino-acid chain; its full sequence is Aspartate carbamoyltransferase catalytic subunit (320 aa).

Positions 68 and 69 each coordinate carbamoyl phosphate. Lysine 96 contributes to the L-aspartate binding site. 3 residues coordinate carbamoyl phosphate: arginine 118, histidine 148, and glutamine 151. L-aspartate-binding residues include arginine 181 and arginine 236. Residues glycine 277 and proline 278 each coordinate carbamoyl phosphate.

It belongs to the aspartate/ornithine carbamoyltransferase superfamily. ATCase family. Heterododecamer (2C3:3R2) of six catalytic PyrB chains organized as two trimers (C3), and six regulatory PyrI chains organized as three dimers (R2).

The catalysed reaction is carbamoyl phosphate + L-aspartate = N-carbamoyl-L-aspartate + phosphate + H(+). It participates in pyrimidine metabolism; UMP biosynthesis via de novo pathway; (S)-dihydroorotate from bicarbonate: step 2/3. Catalyzes the condensation of carbamoyl phosphate and aspartate to form carbamoyl aspartate and inorganic phosphate, the committed step in the de novo pyrimidine nucleotide biosynthesis pathway. The sequence is that of Aspartate carbamoyltransferase catalytic subunit from Delftia acidovorans (strain DSM 14801 / SPH-1).